Here is a 487-residue protein sequence, read N- to C-terminus: 3-octaprenyl-4-hydroxybenzoate carboxy-lyase (487 aa).

Position 172 (Asn172) interacts with Mn(2+). Prenylated FMN is bound by residues 175–177, 189–191, and 194–195; these read IYR, RWL, and RG. Residue Glu238 coordinates Mn(2+). Asp287 (proton donor) is an active-site residue.

It belongs to the UbiD family. In terms of assembly, homohexamer. Requires prenylated FMN as cofactor. It depends on Mn(2+) as a cofactor.

Its subcellular location is the cell membrane. The catalysed reaction is a 4-hydroxy-3-(all-trans-polyprenyl)benzoate + H(+) = a 2-(all-trans-polyprenyl)phenol + CO2. The protein operates within cofactor biosynthesis; ubiquinone biosynthesis. Functionally, catalyzes the decarboxylation of 3-octaprenyl-4-hydroxy benzoate to 2-octaprenylphenol, an intermediate step in ubiquinone biosynthesis. The polypeptide is 3-octaprenyl-4-hydroxybenzoate carboxy-lyase (Blochmanniella pennsylvanica (strain BPEN)).